Reading from the N-terminus, the 419-residue chain is Variant surface glycoprotein YnAT 1.1 (419 aa).

The N-terminal stretch at 1–28 (MKRVLSNVLKAWIFTIVAFHNFSTSVTA) is a signal peptide. Asn-82 and Asn-358 each carry an N-linked (GlcNAc...) asparagine glycan. Residues 369–405 (ESSRPPSTDANTSQKGPLQRPEKSGESSHLPSGSSHG) form a disordered region. A compositionally biased stretch (polar residues) spans 372-384 (RPPSTDANTSQKG). Asn-379 carries N-linked (GlcNAc...) (high mannose) asparagine glycosylation. Low complexity predominate over residues 395–405 (SSHLPSGSSHG). Ser-400 carries GPI-anchor amidated serine lipidation. Residues 401 to 419 (GSSHGTKAIRSILHVALLM) constitute a propeptide, removed in mature form.

The protein localises to the cell membrane. In terms of biological role, VSG forms a coat on the surface of the parasite. The trypanosome evades the immune response of the host by expressing a series of antigenically distinct VSGs from an estimated 1000 VSG genes. The chain is Variant surface glycoprotein YnAT 1.1 from Trypanosoma congolense.